The chain runs to 209 residues: Kynurenine formamidase (209 aa).

W20 provides a ligand contact to substrate. 3 residues coordinate Zn(2+): H50, H54, and D56. Residue H60 is the Proton donor/acceptor of the active site. Zn(2+) is bound by residues H161 and E173.

The protein belongs to the Cyclase 1 superfamily. KynB family. Homodimer. Requires Zn(2+) as cofactor.

It catalyses the reaction N-formyl-L-kynurenine + H2O = L-kynurenine + formate + H(+). The protein operates within amino-acid degradation; L-tryptophan degradation via kynurenine pathway; L-kynurenine from L-tryptophan: step 2/2. In terms of biological role, catalyzes the hydrolysis of N-formyl-L-kynurenine to L-kynurenine, the second step in the kynurenine pathway of tryptophan degradation. The protein is Kynurenine formamidase of Bacillus cereus (strain ZK / E33L).